We begin with the raw amino-acid sequence, 129 residues long: Histone H2A-IV (129 aa).

The segment at 1–22 (MSGRGKQGGKARAKAKSRSSRA) is disordered. Residue serine 2 is modified to N-acetylserine. Serine 2 carries the post-translational modification Phosphoserine. Lysine 6 bears the N6-(2-hydroxyisobutyryl)lysine mark. Lysine 6 and lysine 10 each carry N6-acetyllysine. Residues 7 to 19 (QGGKARAKAKSRS) show a composition bias toward basic residues. Lysine 10 is modified (N6-(2-hydroxyisobutyryl)lysine; alternate). An N6-lactoyllysine; alternate modification is found at lysine 10. An N6-succinyllysine modification is found at lysine 10. Residues lysine 14 and lysine 16 each participate in a glycyl lysine isopeptide (Lys-Gly) (interchain with G-Cter in ubiquitin) cross-link. Lysine 37 bears the N6-(2-hydroxyisobutyryl)lysine; alternate mark. 2 positions are modified to N6-(2-hydroxyisobutyryl)lysine: lysine 75 and lysine 76. An N6-(2-hydroxyisobutyryl)lysine; alternate modification is found at lysine 96. Lysine 96 is subject to N6-succinyllysine. Residue lysine 96 is modified to N6-glutaryllysine; alternate. An N6-glutaryllysine modification is found at lysine 100. Glutamine 105 carries the N5-methylglutamine modification. Lysine 119 is subject to N6-(2-hydroxyisobutyryl)lysine; alternate. Residues lysine 119 and lysine 120 each carry the N6-glutaryllysine; alternate modification. Lysine 120 is covalently cross-linked (Glycyl lysine isopeptide (Lys-Gly) (interchain with G-Cter in ubiquitin)).

The protein belongs to the histone H2A family. The nucleosome is a histone octamer containing two molecules each of H2A, H2B, H3 and H4 assembled in one H3-H4 heterotetramer and two H2A-H2B heterodimers. The octamer wraps approximately 147 bp of DNA. In terms of processing, monoubiquitination of Lys-120 (H2AK119Ub) gives a specific tag for epigenetic transcriptional repression. Following DNA double-strand breaks (DSBs), it is ubiquitinated through 'Lys-63' linkage of ubiquitin moieties, leading to the recruitment of repair proteins to sites of DNA damage. H2AK119Ub and ionizing radiation-induced 'Lys-63'-linked ubiquitination are distinct events. Phosphorylation on Ser-2 is enhanced during mitosis. Phosphorylation on Ser-2 directly represses transcription. Post-translationally, glutamine methylation at Gln-105 (H2AQ104me) by FBL is specifically dedicated to polymerase I. It is present at 35S ribosomal DNA locus and impairs binding of the FACT complex.

It localises to the nucleus. Its subcellular location is the chromosome. In terms of biological role, core component of nucleosome. Nucleosomes wrap and compact DNA into chromatin, limiting DNA accessibility to the cellular machineries which require DNA as a template. Histones thereby play a central role in transcription regulation, DNA repair, DNA replication and chromosomal stability. DNA accessibility is regulated via a complex set of post-translational modifications of histones, also called histone code, and nucleosome remodeling. This chain is Histone H2A-IV, found in Gallus gallus (Chicken).